We begin with the raw amino-acid sequence, 508 residues long: ATP synthase subunit alpha, chloroplastic (508 aa).

Position 170–177 (170–177) interacts with ATP; sequence GDRQTGKT.

It belongs to the ATPase alpha/beta chains family. F-type ATPases have 2 components, CF(1) - the catalytic core - and CF(0) - the membrane proton channel. CF(1) has five subunits: alpha(3), beta(3), gamma(1), delta(1), epsilon(1). CF(0) has four main subunits: a, b, b' and c.

The protein resides in the plastid. It localises to the chloroplast thylakoid membrane. It catalyses the reaction ATP + H2O + 4 H(+)(in) = ADP + phosphate + 5 H(+)(out). Produces ATP from ADP in the presence of a proton gradient across the membrane. The alpha chain is a regulatory subunit. The chain is ATP synthase subunit alpha, chloroplastic from Helianthus annuus (Common sunflower).